The sequence spans 458 residues: Argininosuccinate lyase (458 aa).

It belongs to the lyase 1 family. Argininosuccinate lyase subfamily.

It localises to the cytoplasm. The enzyme catalyses 2-(N(omega)-L-arginino)succinate = fumarate + L-arginine. It functions in the pathway amino-acid biosynthesis; L-arginine biosynthesis; L-arginine from L-ornithine and carbamoyl phosphate: step 3/3. This is Argininosuccinate lyase from Geobacter metallireducens (strain ATCC 53774 / DSM 7210 / GS-15).